The chain runs to 237 residues: Phosphoribosylaminoimidazole-succinocarboxamide synthase (237 aa).

The protein belongs to the SAICAR synthetase family.

The enzyme catalyses 5-amino-1-(5-phospho-D-ribosyl)imidazole-4-carboxylate + L-aspartate + ATP = (2S)-2-[5-amino-1-(5-phospho-beta-D-ribosyl)imidazole-4-carboxamido]succinate + ADP + phosphate + 2 H(+). It participates in purine metabolism; IMP biosynthesis via de novo pathway; 5-amino-1-(5-phospho-D-ribosyl)imidazole-4-carboxamide from 5-amino-1-(5-phospho-D-ribosyl)imidazole-4-carboxylate: step 1/2. The chain is Phosphoribosylaminoimidazole-succinocarboxamide synthase from Idiomarina loihiensis (strain ATCC BAA-735 / DSM 15497 / L2-TR).